The following is a 118-amino-acid chain: Large ribosomal subunit protein uL18 (118 aa).

This sequence belongs to the universal ribosomal protein uL18 family. As to quaternary structure, part of the 50S ribosomal subunit; part of the 5S rRNA/L5/L18/L25 subcomplex. Contacts the 5S and 23S rRNAs.

This is one of the proteins that bind and probably mediate the attachment of the 5S RNA into the large ribosomal subunit, where it forms part of the central protuberance. The chain is Large ribosomal subunit protein uL18 from Campylobacter concisus (strain 13826).